We begin with the raw amino-acid sequence, 431 residues long: Ribosome assembly protein SQT1 (431 aa).

WD repeat units follow at residues 63–102, 107–146, 149–192, 199–243, 309–348, and 350–387; these read KHTD…PKFA, GYGE…AQWK, SQMQ…GSLE, VHQQ…QLFK, ELDA…VRHK, and VLED…EKFV.

Interacts strongly with QSR1. Part of an oligomeric protein complex that is loosely associated with ribosomes.

May be involved in the late step of 60S ribosomal subunit assembly or modification in the cytoplasm. In Saccharomyces cerevisiae (strain ATCC 204508 / S288c) (Baker's yeast), this protein is Ribosome assembly protein SQT1 (SQT1).